A 128-amino-acid polypeptide reads, in one-letter code: Aspartate 1-decarboxylase (128 aa).

Ser25 functions as the Schiff-base intermediate with substrate; via pyruvic acid in the catalytic mechanism. Ser25 bears the Pyruvic acid (Ser) mark. Residue Thr57 coordinates substrate. The active-site Proton donor is Tyr58. 73-75 (GSA) is a binding site for substrate.

This sequence belongs to the PanD family. Heterooctamer of four alpha and four beta subunits. Pyruvate serves as cofactor. In terms of processing, is synthesized initially as an inactive proenzyme, which is activated by self-cleavage at a specific serine bond to produce a beta-subunit with a hydroxyl group at its C-terminus and an alpha-subunit with a pyruvoyl group at its N-terminus.

It is found in the cytoplasm. It carries out the reaction L-aspartate + H(+) = beta-alanine + CO2. It participates in cofactor biosynthesis; (R)-pantothenate biosynthesis; beta-alanine from L-aspartate: step 1/1. Functionally, catalyzes the pyruvoyl-dependent decarboxylation of aspartate to produce beta-alanine. This chain is Aspartate 1-decarboxylase, found in Burkholderia cenocepacia (strain HI2424).